A 143-amino-acid polypeptide reads, in one-letter code: Large-conductance mechanosensitive channel (143 aa).

The next 3 helical transmembrane spans lie at 16–36 (VMDLAVGVIIGGAFSGITNSL), 40–60 (IIMPIVAFIAGGELNFKNMFI), and 87–107 (GSFITVLINFLILAFIIFMMV).

Belongs to the MscL family. In terms of assembly, homopentamer.

It is found in the cell inner membrane. Functionally, channel that opens in response to stretch forces in the membrane lipid bilayer. May participate in the regulation of osmotic pressure changes within the cell. This Psychrobacter sp. (strain PRwf-1) protein is Large-conductance mechanosensitive channel.